A 745-amino-acid polypeptide reads, in one-letter code: Polyribonucleotide nucleotidyltransferase (745 aa).

Mg(2+) contacts are provided by D487 and D493. Residues 554–613 (PRIETMQIPTDKIRDVIGTGGKIIREIVEKTGAKINIEDTGVVKIASSDGKAIKAAYNWI) enclose the KH domain. Positions 623 to 691 (GTIYDGTIVK…ERGKIRLSMK (69 aa)) constitute an S1 motif domain. The interval 695–745 (QETGEDITEKLKAERAERGEPEREERSDRGDRGDRGPRRDRGERRRESSGE) is disordered. Residues 701 to 745 (ITEKLKAERAERGEPEREERSDRGDRGDRGPRRDRGERRRESSGE) show a composition bias toward basic and acidic residues.

Belongs to the polyribonucleotide nucleotidyltransferase family. Mg(2+) is required as a cofactor.

It is found in the cytoplasm. The enzyme catalyses RNA(n+1) + phosphate = RNA(n) + a ribonucleoside 5'-diphosphate. Its function is as follows. Involved in mRNA degradation. Catalyzes the phosphorolysis of single-stranded polyribonucleotides processively in the 3'- to 5'-direction. This is Polyribonucleotide nucleotidyltransferase from Methylorubrum populi (strain ATCC BAA-705 / NCIMB 13946 / BJ001) (Methylobacterium populi).